The primary structure comprises 1160 residues: MHRRSSGSPVEDDAEDPLISRTPSEPSGPNAVEPSERARPQVARTGTSFDLRRDHTGASTPRSRNSSTWRMPSSATTTLLPPDPRSSSAAMPLTSQRLLAEASPDAQSRSRPARLRSPWPCSILTALTSLLASLFLCAILRSFAARQTGGDGCGIPVMSPAFLHMAGFDTEHTRFASKYNLYLYREQGVDPFNHENLGLNGAPVLFLPGNAGSYRQVRSLAAEASRHYFEVVRHDQERLRSGTRSLDFFMIDFNEDMAAFHGQTLLDQAEYVNEAVAYILSLYHDPKRSRRDPELPDPSSVIIIGHSMGGIVARTTLTMSNYQANSVNTIITMSAPHAKPPVSFESDVVHTYKQINDYWREAYSQTWANNNPLWHVTLISIAGGSRDTVVPSDYASISSLVPETHGFTVFTSTIPDVWIGMDHLSITWCDQFRKAIIKSLFEIVDVRRASQTKPRAERMRVFKKWYLTGLEPIAERTLSQKEPNTLLTLEDQSNTILPQGQRLILRELGHRRSPNVHLLPVPPQGVAGKKFTLLTNQRFDKSGEQGTLEVLFCSVFPLQNGKFSTVFTMNMDFSGGNVGSTRLACKNAAEDAIHLPASTHFSKHPYDRAEPFSYLQYDLEDLAEHQFVAVVDKAQSPTKGWLLAEFSDSSDAVIRARLGLGGLLSAGLKMRLPANRPMLTEVKIPALYSSLLDYNLKIVRRNHGNQQELFTPLLRQSIPDPHESKFFVNVKDVNVNLHGVAPFMPPPLREQAAVGGVSFQLWTDPSCDSTVDISLHVDIASSLGELVMRYRTVFAAFPILVVALVLRKQFQVYDQTGYFITFTEGLDSALRSSLPMLLLAMSLLASSLATSSRLPPSDDPFHWPLNSTESPIDFTKNDLLLGSQDAFFWFLVPLFGLICVGVCVILNYIALALLSVLAFFYGIFKSKSGYIKRDDKRLVPGFHSTSVTVTNEASNLPIFSAPTPRKRMINTAILLLLVSTTIPYQFAYLVACIVHLATCVRAQWHAKETKSTTHYNFFNYTHSIFILMLWILPINILVLLVWAHNLVVHWFMPFSSHHNVLSIMPFILLVEAMTTGTMIPRVTTRFKYITSLILFSIAIYAAVYGVSYAYLLHHLANIFAAWLVGVYFFSSGFSVRRLWRVLEGDEGTSNSEPGSMKKKP.

A disordered region spans residues 1–92 (MHRRSSGSPV…DPRSSSAAMP (92 aa)). Positions 57–92 (GASTPRSRNSSTWRMPSSATTTLLPPDPRSSSAAMP) are enriched in polar residues. An N-linked (GlcNAc...) asparagine glycan is attached at Asn-65. Residues 120-140 (PCSILTALTSLLASLFLCAIL) traverse the membrane as a helical segment. Residue Ser-307 is part of the active site. Helical transmembrane passes span 786 to 806 (LVMR…ALVL) and 832 to 852 (SSLP…ATSS). A glycan (N-linked (GlcNAc...) asparagine) is linked at Asn-866. 2 consecutive transmembrane segments (helical) span residues 886–906 (AFFW…CVIL) and 973–993 (ILLL…VACI). Asn-1019 carries N-linked (GlcNAc...) asparagine glycosylation. A run of 4 helical transmembrane segments spans residues 1023–1043 (SIFI…LVWA), 1060–1080 (VLSI…TMIP), 1092–1112 (LILF…AYLL), and 1115–1135 (LANI…GFSV).

Belongs to the GPI inositol-deacylase family.

Its subcellular location is the endoplasmic reticulum membrane. Its function is as follows. Involved in inositol deacylation of GPI-anchored proteins which plays important roles in the quality control and ER-associated degradation of GPI-anchored proteins. This Aspergillus terreus (strain NIH 2624 / FGSC A1156) protein is GPI inositol-deacylase (bst1).